The sequence spans 666 residues: Translation factor guf1, mitochondrial (666 aa).

The transit peptide at 1 to 44 directs the protein to the mitochondrion; the sequence is MRGCLQLGRWLSAAPRCQAASLRPPTVFPSYRYNRSFSTTTIYY. Residues 68 to 248 enclose the tr-type G domain; sequence ERFRNFCIVA…TVVEKVPAPI (181 aa). GTP-binding positions include 77-84, 141-145, and 195-198; these read AHVDHGKS, DTPGH, and NKVD.

The protein belongs to the TRAFAC class translation factor GTPase superfamily. Classic translation factor GTPase family. LepA subfamily.

The protein localises to the mitochondrion inner membrane. It catalyses the reaction GTP + H2O = GDP + phosphate + H(+). Its function is as follows. Promotes mitochondrial protein synthesis. May act as a fidelity factor of the translation reaction, by catalyzing a one-codon backward translocation of tRNAs on improperly translocated ribosomes. Binds to mitochondrial ribosomes in a GTP-dependent manner. This chain is Translation factor guf1, mitochondrial (guf1), found in Penicillium rubens (strain ATCC 28089 / DSM 1075 / NRRL 1951 / Wisconsin 54-1255) (Penicillium chrysogenum).